The following is a 348-amino-acid chain: Rhodopsin (348 aa).

Methionine 1 is subject to N-acetylmethionine. The Extracellular portion of the chain corresponds to 1-36; that stretch reads MNGTEGLNFYVPFSNKTGVVRSPFEYPQYYLAEPWQ. N-linked (GlcNAc...) asparagine glycans are attached at residues asparagine 2 and asparagine 15. A helical transmembrane segment spans residues 37–61; the sequence is FSVLAAYMFLLIVLGFPINFLTLYV. At 62 to 73 the chain is on the cytoplasmic side; it reads TVQHKKLRTPLN. Residues 74–96 form a helical membrane-spanning segment; that stretch reads YIPLNLAVANLFMVFGGFTTTLY. Topologically, residues 97-110 are extracellular; sequence TSLHAYFVFGPTGC. Cysteine 110 and cysteine 187 are joined by a disulfide. A helical membrane pass occupies residues 111–133; sequence NLEGFFATLGGEIALWSLVVLAI. Residues 134-136 carry the 'Ionic lock' involved in activated form stabilization motif; sequence ERY. At 134 to 152 the chain is on the cytoplasmic side; it reads ERYVVVCKPMSNFRFGENH. A helical membrane pass occupies residues 153–173; that stretch reads AIMGLALTWVMAMACAAPPLV. Residues 174-202 are Extracellular-facing; the sequence is GWSRYIPEGMQCSCGIDYYTSRQEVNNES. Residue glutamate 201 coordinates Zn(2+). A helical membrane pass occupies residues 203–224; the sequence is FVIYMFVVHFTIPLVIIFFCYG. At 225-252 the chain is on the cytoplasmic side; it reads QLVFTVKEAAAQQQESATTQKAEKEVTR. A helical membrane pass occupies residues 253-274; sequence MVIIMVVAFLICWVPYASVAFY. At 275 to 286 the chain is on the extracellular side; it reads IFTHQGSDFGPI. Position 279 (glutamine 279) interacts with Zn(2+). The chain crosses the membrane as a helical span at residues 287 to 308; that stretch reads FMTIPSFFAKSSSIYNPVIYIM. Lysine 296 is subject to N6-(retinylidene)lysine. Residues 309-348 are Cytoplasmic-facing; sequence MNKQLRNCMLTTLCCGRNPLGDDEASTTASKTETSQVAPA. S-palmitoyl cysteine attachment occurs at residues cysteine 322 and cysteine 323. Positions 330-348 are interaction with SAG; that stretch reads DDEASTTASKTETSQVAPA. Serine 334 is modified (phosphoserine). Residues threonine 335 and threonine 336 each carry the phosphothreonine modification. At serine 338 the chain carries Phosphoserine. Phosphothreonine occurs at positions 340 and 342. Serine 343 is modified (phosphoserine).

This sequence belongs to the G-protein coupled receptor 1 family. Opsin subfamily. As to quaternary structure, homodimer. May form a complex composed of RHO, GRK1 and RCVRN in a Ca(2+)-dependent manner; RCVRN prevents the interaction between GRK1 and RHO. Interacts with GRK1. Interacts (phosphorylated form) with SAG. Interacts with GNAT1. Interacts with GNAT3. SAG and G-proteins compete for a common binding site. Interacts with PRCD; the interaction promotes PRCD stability. Forms a complex with ASAP1 and ARF4. Forms a complex with ASAP1, RAB11A, Rabin8/RAB3IP, ARF4 and RAB11FIP3; the complex regulates Golgi-to-cilia rhodopsin/RHO transport in photoreceptors. In terms of processing, phosphorylated on some or all of the serine and threonine residues present in the C-terminal region. Post-translationally, contains one covalently linked retinal chromophore. Upon light absorption, the covalently bound 11-cis-retinal is converted to all-trans-retinal. After hydrolysis of the Schiff base and release of the covalently bound all-trans-retinal, active rhodopsin is regenerated by binding of a fresh molecule of 11-cis-retinal.

The protein localises to the membrane. It localises to the cell projection. It is found in the cilium. The protein resides in the photoreceptor outer segment. Functionally, photoreceptor required for image-forming vision at low light intensity. Required for photoreceptor cell viability after birth. Light-induced isomerization of 11-cis to all-trans retinal triggers a conformational change that activates signaling via G-proteins. Subsequent receptor phosphorylation mediates displacement of the bound G-protein alpha subunit by the arrestin SAG and terminates signaling. The protein is Rhodopsin (RHO) of Globicephala melas (Long-finned pilot whale).